The following is a 138-amino-acid chain: uncharacterized protein (138 aa).

The chain crosses the membrane as a helical span at residues 19–40 (ECKVSVISFFLLAFLLMAHIWL). 3 consecutive repeat copies span residues 94–106 (KGEI…KKEG), 107–119 (KGEI…KKEG), and 120–132 (KGEI…KKEV). Residues 94–132 (KGEIEGKEEKKEGKGEIEGKEEKKEGKGEIEGKEEKKEV) form a 3 X 13 AA tandem repeats of K-G-E-I-E-G-K-E-E-K-K-E-[GV] region. Residues 98 to 138 (EGKEEKKEGKGEIEGKEEKKEGKGEIEGKEEKKEVENGPRK) form a disordered region.

Expressed in roots, leaves and flowers.

It localises to the mitochondrion membrane. Its function is as follows. Involved in cytoplasmic male sterility (CMS) by leading to pollen abortion. Not expressed in fertile (normal) plants. This is an uncharacterized protein from Raphanus sativus (Radish).